The chain runs to 308 residues: Isoflavone reductase-like protein (308 aa).

NADP(+) is bound by residues 11-17 (GGTGYIG), arginine 36, and lysine 45. The Proton acceptor role is filled by lysine 133. Arginine 137 serves as a coordination point for NADP(+).

It belongs to the NmrA-type oxidoreductase family. Isoflavone reductase subfamily. In terms of assembly, homodimer.

It localises to the cytoplasm. The chain is Isoflavone reductase-like protein from Olea europaea (Common olive).